Here is a 549-residue protein sequence, read N- to C-terminus: MATKLARLATWLVLVGCLLWRAGAVQLSPPNSRTNDLASGTPHVARGDTEAQSGTGDDSDFPQAVVEEVADMSGGRVPRVPASSTTTSASEGIFRRLVRRLRRGRGTADGAGVADETHQGPRPPLRKRLAQHFRRLRGFFGRLTPRWLSGLGRRAQRWWRGRQRPLLDPSFHGLEAGDSFMRDLLKREEELIGYCREEALKEPAAMVEAVTATVWPQNAETTVDSLLSQGERKLKLVEPLRVGDRSVVFLVRDVERLEDFALKVFTMGAENSRSELERLHEATFAAARLLGESPEEARDRRRLLLPSDAVAVQSQPPFAQLSPGQDDYAVANYLLLMPAASVDLELLFSTLDFVYVFRGDEGILALHILTAQLIRLAANLQSKGLVHGHFTPDNLFIMPDGRLMLGDVSALWKVGTRGPASSVPVTYAPREFLNASTATFTHALNAWQLGLSIYRVWCLFLPFGLVTPGIKGSWKRPSLRVPGTDSLAFGSCTPLPDFVKTLIGRFLNFDRRRRLLPLEAMETPEFLQLQNEISSSLSTGQPTAAPSVA.

The signal sequence occupies residues 1–24; the sequence is MATKLARLATWLVLVGCLLWRAGA. One can recognise a Protein kinase domain in the interval 234-527; it reads LKLVEPLRVG…LEAMETPEFL (294 aa). Residues arginine 241, aspartate 244, arginine 245, serine 246, lysine 263, methionine 337, proline 338, alanine 340, aspartate 343, and aspartate 393 each coordinate ATP. Aspartate 244 lines the ADP pocket. Residues serine 246, lysine 263, methionine 337, proline 338, and alanine 340 each coordinate ADP. Residue aspartate 393 participates in ADP binding. Mg(2+) contacts are provided by aspartate 393 and aspartate 407. The N-linked (GlcNAc...) asparagine glycan is linked to asparagine 434. Cysteine 458 and cysteine 492 form a disulfide bridge.

Belongs to the protein kinase superfamily. Ser/Thr protein kinase family. Component of a complex at least composed of ROP18 and ROP5. Interacts with GRA7. Interacts with ROP17. Interacts with mouse IRGA6/IIGP1; the interaction results in inhibition of IRGA6/IIGP1 GTPase activity and/or oligomerization.

Its subcellular location is the secreted. It localises to the parasitophorous vacuole. It is found in the cytoplasmic vesicle. The protein localises to the secretory vesicle. The protein resides in the rhoptry. In terms of biological role, pseudokinase. Essential for virulence in the type I lineage. Mediates parasite survival in mouse monocytes. Required for the parasite ability to resist mouse innate immune effectors triggered by the IFN-gamma (IFNG). Reduces the accumulation of mouse IRGA6 (IIGP1) and IRGB6 (TGTP1/TGTP2), immunity-related GTPases (IRGs) that protect mice from infection by certain intracellular pathogens, on the parasitophorous vacuole and IRG-mediated killing of parasites by mouse cells. Regulates the activity of ROP18, an active kinase that targets IRGs to prevent IRG-mediated parasite killing by mouse cells. Acts as an allosteric inhibitor of mouse IRGA6 (IIGP1). Does not affect IFN-gamma (IFNG)-mediated parasite killing in human cells that do not possess the large variety of IRGs. This chain is Polymorphic pseudokinase ROP5, found in Toxoplasma gondii.